Reading from the N-terminus, the 159-residue chain is Neuroglobin (159 aa).

The Globin domain maps to 3–151; sequence KLSSKDKELI…VVASMSRGWA (149 aa). Heme b-binding residues include His-66 and His-98.

Belongs to the globin family. Monomer. Homodimers and homotetramers. Mainly monomeric but also detected as part of homodimers and homotetramers.

It is found in the cytoplasm. The protein resides in the cytosol. Its subcellular location is the mitochondrion matrix. The enzyme catalyses Fe(III)-heme b-[protein] + nitric oxide + H2O = Fe(II)-heme b-[protein] + nitrite + 2 H(+). In terms of biological role, monomeric globin with a bis-histidyl six-coordinate heme-iron atom through which it can bind dioxygen, carbon monoxide and nitric oxide. Could help transport oxygen and increase its availability to the metabolically active neuronal tissues, though its low quantity in tissues as well as its high affinity for dioxygen, which may limit its oxygen-releasing ability, argue against it. The ferrous/deoxygenated form exhibits a nitrite reductase activity and it could produce nitric oxide which in turn inhibits cellular respiration in response to hypoxia. In its ferrous/deoxygenated state, it may also exhibit GDI (Guanine nucleotide Dissociation Inhibitor) activity toward heterotrimeric G-alpha proteins, thereby regulating signal transduction to facilitate neuroprotective responses in the wake of hypoxia and associated oxidative stress. This chain is Neuroglobin (ngb), found in Tetraodon nigroviridis (Spotted green pufferfish).